The following is a 485-amino-acid chain: ATP synthase subunit beta, cyanelle (485 aa).

162–169 (GGAGVGKT) lines the ATP pocket.

It belongs to the ATPase alpha/beta chains family. F-type ATPases have 2 components, CF(1) - the catalytic core - and CF(0) - the membrane proton channel. CF(1) has five subunits: alpha(3), beta(3), gamma(1), delta(1), epsilon(1). CF(0) has four main subunits: a(1), b(1), b'(1) and c(9-12).

It is found in the plastid. Its subcellular location is the cyanelle thylakoid membrane. The catalysed reaction is ATP + H2O + 4 H(+)(in) = ADP + phosphate + 5 H(+)(out). Produces ATP from ADP in the presence of a proton gradient across the membrane. The catalytic sites are hosted primarily by the beta subunits. The protein is ATP synthase subunit beta, cyanelle of Cyanophora paradoxa.